The following is a 1095-amino-acid chain: Putative patatin-like phospholipase domain-containing protein M110.7 (1095 aa).

A helical membrane pass occupies residues 9–29; it reads LLLIFENILELCMCITLVILI. The disordered stretch occupies residues 75–113; the sequence is HKKRSSKEEMTPDKKRDSSEKISKQPPRELFEPNEQEQV. Residues 80 to 105 are compositionally biased toward basic and acidic residues; the sequence is SKEEMTPDKKRDSSEKISKQPPRELF. Residues 144–237, 327–416, and 450–509 contribute to the a nucleoside 3',5'-cyclic phosphate site; these read VETL…LTSF, RKYE…IQFL, and IETG…TVMA. In terms of domain architecture, PNPLA spans 768–935; it reads IVFGGGGARG…VNNLPADIMR (168 aa). A GXGXXG motif is present at residues 772–777; it reads GGGARG. The GXSXG motif lies at 799–803; the sequence is GTSIG. The Nucleophile role is filled by serine 801. Aspartate 922 (proton acceptor) is an active-site residue. A DGA/G motif is present at residues 922–924; the sequence is DGA.

The protein belongs to the NTE family.

The protein localises to the membrane. The sequence is that of Putative patatin-like phospholipase domain-containing protein M110.7 from Caenorhabditis elegans.